We begin with the raw amino-acid sequence, 458 residues long: Mannan endo-1,6-alpha-mannosidase DFG5 (458 aa).

A signal peptide spans 1-26 (MIVNISAKMILSICFTFLSFFKATHA). N-linked (GlcNAc...) asparagine glycosylation is found at Asn89, Asn114, Asn138, Asn208, Asn231, Asn245, Asn270, Asn273, and Asn417. The interval 399–418 (PYKEDNGGTSKGDANAGMNS) is disordered. Residue Gly437 is the site of GPI-anchor amidated glycine attachment. A propeptide spans 438-458 (AAIITAVILSVLTGGAVWMLF) (removed in mature form).

This sequence belongs to the glycosyl hydrolase 76 family. N-glycosylated.

The protein localises to the cell membrane. It carries out the reaction Random hydrolysis of (1-&gt;6)-alpha-D-mannosidic linkages in unbranched (1-&gt;6)-mannans.. Functionally, required for normal synthesis of the cell wall. This chain is Mannan endo-1,6-alpha-mannosidase DFG5 (DFG5), found in Saccharomyces cerevisiae (strain ATCC 204508 / S288c) (Baker's yeast).